Reading from the N-terminus, the 307-residue chain is MPAPEPTRRAKKDASASPSPAHPASRELVILTGLSGAGKGSALKAFEDLGFYAVDNLPIELVPRFAELVAQSVEITRATLVVDVREGQSLAKFPQILQEVRQTLQTTVVFLEASQAVLLRRFSETRRPHPLGREEQVVHAIADEKQRLEPLRNVADMIVDTSRFNVHELRAYIQSKFTREGNAKSMLITCMSFGYKNGVPLDADLVFDVRFLPNPHFIPQFRPLTGKDAKVVRYIRKFEQTRTFLDKVTELLLFLLPHYVHEGKSYLTVAFGCTGGQHRSVMIAEEIAKRLGKKSYRVKAEHRDMPR.

The segment covering 1–14 (MPAPEPTRRAKKDA) has biased composition (basic and acidic residues). Positions 1–23 (MPAPEPTRRAKKDASASPSPAHP) are disordered. Position 33–40 (33–40 (GLSGAGKG)) interacts with ATP. 83–86 (DVRE) is a GTP binding site.

This sequence belongs to the RapZ-like family.

Its function is as follows. Displays ATPase and GTPase activities. In Acidobacterium capsulatum (strain ATCC 51196 / DSM 11244 / BCRC 80197 / JCM 7670 / NBRC 15755 / NCIMB 13165 / 161), this protein is Nucleotide-binding protein ACP_0619.